Consider the following 212-residue polypeptide: Probable GH family 25 lysozyme 2 (212 aa).

The signal sequence occupies residues 1 to 19 (MRFIALLISFFALLKVISA). In terms of domain architecture, Ch-type lysozyme spans 20–212 (ISGVDISSAS…GLGFDLNWYP (193 aa)). Residues aspartate 24, aspartate 112, and glutamate 114 contribute to the active site.

It belongs to the glycosyl hydrolase 25 family.

Its subcellular location is the secreted. The catalysed reaction is Hydrolysis of (1-&gt;4)-beta-linkages between N-acetylmuramic acid and N-acetyl-D-glucosamine residues in a peptidoglycan and between N-acetyl-D-glucosamine residues in chitodextrins.. This Dictyostelium discoideum (Social amoeba) protein is Probable GH family 25 lysozyme 2.